We begin with the raw amino-acid sequence, 178 residues long: MTQLSSKDVPSMGRRQFMNLLTFGTATGVALGALYPVANYFMPLRAGGGGGGTSAKDELGNPITKTGWLATHQAGDRSLVQGLKGDPTYLIVNEGGGIGEFGLNAICTHLGCVVPWDSGANKFICPCHGSQYDTNGKVVRGPAPLSLALAHVDIEDDAVLVKQWSETDFRTNENPWWA.

The helical transmembrane segment at 20 to 42 (LLTFGTATGVALGALYPVANYFM) threads the bilayer. Positions 65–161 (KTGWLATHQA…VDIEDDAVLV (97 aa)) constitute a Rieske domain. [2Fe-2S] cluster-binding residues include Cys107, His109, Cys125, and His128. The cysteines at positions 112 and 127 are disulfide-linked.

The protein belongs to the Rieske iron-sulfur protein family. The 4 large subunits of the cytochrome b6-f complex are cytochrome b6, subunit IV (17 kDa polypeptide, PetD), cytochrome f and the Rieske protein, while the 4 small subunits are PetG, PetL, PetM and PetN. The complex functions as a dimer. [2Fe-2S] cluster is required as a cofactor.

The protein localises to the cellular thylakoid membrane. The enzyme catalyses 2 oxidized [plastocyanin] + a plastoquinol + 2 H(+)(in) = 2 reduced [plastocyanin] + a plastoquinone + 4 H(+)(out). Its function is as follows. Component of the cytochrome b6-f complex, which mediates electron transfer between photosystem II (PSII) and photosystem I (PSI), cyclic electron flow around PSI, and state transitions. The chain is Cytochrome b6-f complex iron-sulfur subunit from Prochlorococcus marinus (strain MIT 9215).